We begin with the raw amino-acid sequence, 141 residues long: Holo-[acyl-carrier-protein] synthase (141 aa).

Mg(2+)-binding residues include Asp8 and Glu63.

It belongs to the P-Pant transferase superfamily. AcpS family. Mg(2+) is required as a cofactor.

It is found in the cytoplasm. It catalyses the reaction apo-[ACP] + CoA = holo-[ACP] + adenosine 3',5'-bisphosphate + H(+). Transfers the 4'-phosphopantetheine moiety from coenzyme A to a Ser of acyl-carrier-protein. This is Holo-[acyl-carrier-protein] synthase from Rhodospirillum centenum (strain ATCC 51521 / SW).